Here is a 406-residue protein sequence, read N- to C-terminus: Bifunctional enzyme IspD/IspF (406 aa).

The 2-C-methyl-D-erythritol 4-phosphate cytidylyltransferase stretch occupies residues 1 to 246; it reads MLQMPSKQPI…KLSASLLPDV (246 aa). The interval 247-406 is 2-C-methyl-D-erythritol 2,4-cyclodiphosphate synthase; the sequence is RTGNGYDVHQ…ATVVYRGVKR (160 aa). A divalent metal cation is bound by residues D253 and H255. 4-CDP-2-C-methyl-D-erythritol 2-phosphate contacts are provided by residues 253 to 255 and 279 to 280; these read DVH and HS. An a divalent metal cation-binding site is contributed by H287. Residues 301–303, 377–380, F384, and R387 contribute to the 4-CDP-2-C-methyl-D-erythritol 2-phosphate site; these read DIG and TTNE.

The protein in the N-terminal section; belongs to the IspD/TarI cytidylyltransferase family. IspD subfamily. In the C-terminal section; belongs to the IspF family. A divalent metal cation serves as cofactor.

It catalyses the reaction 2-C-methyl-D-erythritol 4-phosphate + CTP + H(+) = 4-CDP-2-C-methyl-D-erythritol + diphosphate. The catalysed reaction is 4-CDP-2-C-methyl-D-erythritol 2-phosphate = 2-C-methyl-D-erythritol 2,4-cyclic diphosphate + CMP. The protein operates within isoprenoid biosynthesis; isopentenyl diphosphate biosynthesis via DXP pathway; isopentenyl diphosphate from 1-deoxy-D-xylulose 5-phosphate: step 2/6. It functions in the pathway isoprenoid biosynthesis; isopentenyl diphosphate biosynthesis via DXP pathway; isopentenyl diphosphate from 1-deoxy-D-xylulose 5-phosphate: step 4/6. Functionally, bifunctional enzyme that catalyzes the formation of 4-diphosphocytidyl-2-C-methyl-D-erythritol from CTP and 2-C-methyl-D-erythritol 4-phosphate (MEP) (IspD), and catalyzes the conversion of 4-diphosphocytidyl-2-C-methyl-D-erythritol 2-phosphate (CDP-ME2P) to 2-C-methyl-D-erythritol 2,4-cyclodiphosphate (ME-CPP) with a corresponding release of cytidine 5-monophosphate (CMP) (IspF). This is Bifunctional enzyme IspD/IspF from Rhizobium leguminosarum bv. trifolii (strain WSM2304).